We begin with the raw amino-acid sequence, 208 residues long: Uracil phosphoribosyltransferase (208 aa).

Residues Arg78, Arg103, and 130 to 138 (DPMLATGGT) contribute to the 5-phospho-alpha-D-ribose 1-diphosphate site. Residues Ile193 and 198–200 (GDA) contribute to the uracil site. Asp199 provides a ligand contact to 5-phospho-alpha-D-ribose 1-diphosphate.

This sequence belongs to the UPRTase family. The cofactor is Mg(2+).

It carries out the reaction UMP + diphosphate = 5-phospho-alpha-D-ribose 1-diphosphate + uracil. The protein operates within pyrimidine metabolism; UMP biosynthesis via salvage pathway; UMP from uracil: step 1/1. With respect to regulation, allosterically activated by GTP. Catalyzes the conversion of uracil and 5-phospho-alpha-D-ribose 1-diphosphate (PRPP) to UMP and diphosphate. The chain is Uracil phosphoribosyltransferase from Desulfotalea psychrophila (strain LSv54 / DSM 12343).